A 1389-amino-acid chain; its full sequence is DNA-directed RNA polymerase subunit beta' (1389 aa).

The Zn(2+) site is built by Cys-73, Cys-75, Cys-88, and Cys-91. Asp-464, Asp-466, and Asp-468 together coordinate Mg(2+). Residues Cys-810, Cys-884, Cys-891, and Cys-894 each contribute to the Zn(2+) site.

It belongs to the RNA polymerase beta' chain family. In terms of assembly, the RNAP catalytic core consists of 2 alpha, 1 beta, 1 beta' and 1 omega subunit. When a sigma factor is associated with the core the holoenzyme is formed, which can initiate transcription. Requires Mg(2+) as cofactor. It depends on Zn(2+) as a cofactor.

The enzyme catalyses RNA(n) + a ribonucleoside 5'-triphosphate = RNA(n+1) + diphosphate. Functionally, DNA-dependent RNA polymerase catalyzes the transcription of DNA into RNA using the four ribonucleoside triphosphates as substrates. In Pelagibacter ubique (strain HTCC1062), this protein is DNA-directed RNA polymerase subunit beta'.